The sequence spans 409 residues: Isovaleryl-CoA dehydrogenase, mitochondrial (409 aa).

A mitochondrion-targeting transit peptide spans 1–22 (MQRFFSARSILGYAVKTRRRSF). FAD-binding positions include 151–160 (LAMSEPNAGS) and 184–186 (WCT). Serine 160 contacts substrate. Substrate is bound by residues 206 to 207 (SK), tyrosine 261, and 268 to 271 (DLER). The active-site Proton acceptor is the glutamate 270. Residues arginine 296, glutamine 307, and 364 to 368 (QCLGG) each bind FAD. Position 391–392 (391–392 (AG)) interacts with substrate. FAD is bound at residue 393 to 395 (TSE).

It belongs to the acyl-CoA dehydrogenase family. In terms of assembly, homodimer. FAD serves as cofactor. In terms of tissue distribution, expressed in leaves, stems and flowers. Not detected in roots.

The protein resides in the mitochondrion. The catalysed reaction is 3-methylbutanoyl-CoA + oxidized [electron-transfer flavoprotein] + H(+) = 3-methylbut-2-enoyl-CoA + reduced [electron-transfer flavoprotein]. The protein operates within amino-acid degradation; L-leucine degradation; (S)-3-hydroxy-3-methylglutaryl-CoA from 3-isovaleryl-CoA: step 1/3. Its function is as follows. Involved in degradation of the branched-chain amino acids, phytol and lysine for the supply of carbon and electrons to the ETF/ETFQO complex during dark-induced sugar starvation. The protein is Isovaleryl-CoA dehydrogenase, mitochondrial (IVD) of Arabidopsis thaliana (Mouse-ear cress).